The following is a 201-amino-acid chain: Ras-related protein Rab-5A (201 aa).

GTP is bound by residues 16–24, 35–41, 64–68, 122–125, and 152–154; these read GEAAVGKSS, LDYQEST, DTAGQ, NKLD, and SAK. An Effector region motif is present at residues 38 to 46; the sequence is QESTIGAAF. S-geranylgeranyl cysteine attachment occurs at residues Cys-199 and Cys-200.

The protein belongs to the small GTPase superfamily. Rab family.

The protein localises to the cell membrane. It is found in the endosome membrane. Regulated by guanine nucleotide exchange factors (GEFs) which promote the exchange of bound GDP for free GTP. Functionally, required for the fusion of plasma membranes and early endosomes. The chain is Ras-related protein Rab-5A (rab5A) from Dictyostelium discoideum (Social amoeba).